The chain runs to 25 residues: Spinigerin (25 aa).

It is found in the secreted. Functionally, active against Gram-positive bacteria B.megaterium and M.luteus, Gram-negative bacteria E.coli SBS363 and D22, K.pneumoniae, S.typhimurium and P.aeruginosa, yeast C.albicans and filamentous fungi F.culmorum, N.crassa, N.hematococca and T.viridae. Inactive against Gram-positive bacteria B.subtilis, S.pyogenes, B.thuringiensis and S.aureus, Gram-negative bacteria E.cloacae and E.carotovora and filamentous fungus B.bassiana. In Pseudacanthotermes spiniger, this protein is Spinigerin.